Reading from the N-terminus, the 20-residue chain is Peroxidase 1 (20 aa).

A heme-binding site is contributed by H14. Ca(2+) is bound at residue T15.

This sequence belongs to the peroxidase family. Classical plant (class III) peroxidase subfamily. Ca(2+) is required as a cofactor. Heme b serves as cofactor.

The protein resides in the secreted. It carries out the reaction 2 a phenolic donor + H2O2 = 2 a phenolic radical donor + 2 H2O. Removal of H(2)O(2), oxidation of toxic reductants, biosynthesis and degradation of lignin, suberization, auxin catabolism, response to environmental stresses such as wounding, pathogen attack and oxidative stress. These functions might be dependent on each isozyme/isoform in each plant tissue. This is Peroxidase 1 from Betula pendula (European white birch).